Reading from the N-terminus, the 63-residue chain is Disintegrin schistatin-like subunit B (63 aa).

A Disintegrin domain is found at 1-63 (NSVNPCCDPQ…TPDCPRNRYN (63 aa)). Cystine bridges form between Cys6–Cys29, Cys20–Cys26, Cys25–Cys50, and Cys38–Cys57. The short motif at 42–44 (RGD) is the Cell attachment site element.

It belongs to the disintegrin family. Dimeric disintegrin subfamily. As to quaternary structure, heterodimer with subunit A; disulfide-linked. As to expression, expressed by the venom gland.

The protein localises to the secreted. Functionally, may bind to both alpha-IIb/beta-3 (ITGA2B/ITGB3) and alpha-V/beta-3 (ITGAV/ITGB3) integrins, and may inhibit platelet aggregation. The chain is Disintegrin schistatin-like subunit B from Echis carinatus (Saw-scaled viper).